Consider the following 158-residue polypeptide: Transcription antitermination protein NusB (158 aa).

This sequence belongs to the NusB family.

Functionally, involved in transcription antitermination. Required for transcription of ribosomal RNA (rRNA) genes. Binds specifically to the boxA antiterminator sequence of the ribosomal RNA (rrn) operons. The sequence is that of Transcription antitermination protein NusB from Bartonella henselae (strain ATCC 49882 / DSM 28221 / CCUG 30454 / Houston 1) (Rochalimaea henselae).